The primary structure comprises 283 residues: Plasma membrane ascorbate-dependent reductase CYBRD1 (283 aa).

Topologically, residues 1–5 are cytoplasmic; that stretch reads MEGYK. Residues 6–30 form a helical membrane-spanning segment; that stretch reads SFLAFLVSSLLLGFLGVIFTLVWVL. Residues 13–218 enclose the Cytochrome b561 domain; it reads SSLLLGFLGV…FGGLVVWMVT (206 aa). The Extracellular segment spans residues 31 to 45; sequence HWREGLGWDGGAAEF. The chain crosses the membrane as a helical span at residues 46-67; that stretch reads NWHPVLVTSGFIFIQGIAIIVY. The heme b site is built by histidine 48, arginine 68, and lysine 77. Over 68–76 the chain is Cytoplasmic; it reads RLPWTWKCS. L-ascorbate is bound by residues lysine 77 and lysine 81. Residues 77 to 103 form a helical membrane-spanning segment; that stretch reads KLLMKFIHAGLHLTALIFTIVALVAVF. Histidine 84 lines the heme b pocket. Over 104–116 the chain is Extracellular; the sequence is DFHNAKNIPNMYS. Residue histidine 106 coordinates Fe(3+). Heme b is bound by residues 113 to 116 and histidine 118; that span reads NMYS. A helical membrane pass occupies residues 117 to 142; sequence LHSWIGLTVVILYALQLVLGVSIYLL. At 143 to 149 the chain is on the cytoplasmic side; it reads PFASNTL. Position 150 (arginine 150) interacts with L-ascorbate. Residues 150–177 traverse the membrane as a helical segment; that stretch reads RAALMPVHVYSGLFIFGTVIATALMGIT. Positions 157 and 178 each coordinate heme b. Residues 178–195 are Extracellular-facing; sequence EKLIFSLKEPPYSKLPPE. Residues 196–220 form a helical membrane-spanning segment; the sequence is AIFVNTFGLLILVFGGLVVWMVTTP. Topologically, residues 221-283 are cytoplasmic; that stretch reads AWKRPREQGM…LDEAGQRSTM (63 aa). Residue lysine 223 participates in heme b binding. Residues 234–262 form a disordered region; sequence SPTVSSPDETEEGSTITDCSNTEKSDVEL. Residues 235–253 show a composition bias toward polar residues; the sequence is PTVSSPDETEEGSTITDCS.

In terms of assembly, homodimer. The cofactor is heme b.

The protein resides in the cell membrane. The protein localises to the apical cell membrane. The enzyme catalyses Fe(3+)(out) + L-ascorbate(in) = monodehydro-L-ascorbate radical(in) + Fe(2+)(out) + H(+). The catalysed reaction is Cu(2+)(out) + L-ascorbate(in) = Cu(+)(out) + monodehydro-L-ascorbate radical(in) + H(+). It carries out the reaction monodehydro-L-ascorbate radical(out) + L-ascorbate(in) = monodehydro-L-ascorbate radical(in) + L-ascorbate(out). Functionally, plasma membrane reductase that uses cytoplasmic ascorbate as an electron donor to reduce extracellular Fe(3+) into Fe(2+). It is also able to reduce extracellular monodehydro-L-ascorbate and may be involved in extracellular ascorbate regeneration. May also function as a cupric transmembrane reductase. This is Plasma membrane ascorbate-dependent reductase CYBRD1 (cybrd1) from Xenopus laevis (African clawed frog).